We begin with the raw amino-acid sequence, 664 residues long: UvrABC system protein B (664 aa).

One can recognise a Helicase ATP-binding domain in the interval 23–180 (EGLNRGMRFQ…ERLARIGYQR (158 aa)). 36 to 43 (GVTGSGKT) contacts ATP. Positions 89-112 (YYDYYQPEAYIPTKDLYIEKNADI) match the Beta-hairpin motif. Positions 429-588 (DLVNEIVKVK…ITPRSVIKPL (160 aa)) constitute a Helicase C-terminal domain. The UVR domain occupies 622–657 (EEYMAVLEEEMYRAASELRYEDAAALRDELFRIREE).

This sequence belongs to the UvrB family. As to quaternary structure, forms a heterotetramer with UvrA during the search for lesions. Interacts with UvrC in an incision complex.

It localises to the cytoplasm. Functionally, the UvrABC repair system catalyzes the recognition and processing of DNA lesions. A damage recognition complex composed of 2 UvrA and 2 UvrB subunits scans DNA for abnormalities. Upon binding of the UvrA(2)B(2) complex to a putative damaged site, the DNA wraps around one UvrB monomer. DNA wrap is dependent on ATP binding by UvrB and probably causes local melting of the DNA helix, facilitating insertion of UvrB beta-hairpin between the DNA strands. Then UvrB probes one DNA strand for the presence of a lesion. If a lesion is found the UvrA subunits dissociate and the UvrB-DNA preincision complex is formed. This complex is subsequently bound by UvrC and the second UvrB is released. If no lesion is found, the DNA wraps around the other UvrB subunit that will check the other stand for damage. The sequence is that of UvrABC system protein B from Thermotoga petrophila (strain ATCC BAA-488 / DSM 13995 / JCM 10881 / RKU-1).